Consider the following 379-residue polypeptide: Cytochrome b (379 aa).

The next 4 membrane-spanning stretches (helical) occupy residues 33–53 (FGSL…FLAM), 77–98 (WLIR…YLHI), 113–133 (WNIG…GYVL), and 178–198 (FFTF…LHLL). 2 residues coordinate heme b: His83 and His97. 2 residues coordinate heme b: His182 and His196. His201 lines the a ubiquinone pocket. 4 helical membrane-spanning segments follow: residues 226–246 (YKDL…VLFS), 288–308 (LGGV…PLLH), 320–340 (FSQT…WIGG), and 347–367 (FIII…VVMP).

It belongs to the cytochrome b family. As to quaternary structure, the cytochrome bc1 complex contains 3 respiratory subunits (MT-CYB, CYC1 and UQCRFS1), 2 core proteins (UQCRC1 and UQCRC2) and probably 6 low-molecular weight proteins. Requires heme b as cofactor.

It is found in the mitochondrion inner membrane. Its function is as follows. Component of the ubiquinol-cytochrome c reductase complex (complex III or cytochrome b-c1 complex) that is part of the mitochondrial respiratory chain. The b-c1 complex mediates electron transfer from ubiquinol to cytochrome c. Contributes to the generation of a proton gradient across the mitochondrial membrane that is then used for ATP synthesis. The protein is Cytochrome b (MT-CYB) of Iguana iguana (Common iguana).